Here is a 282-residue protein sequence, read N- to C-terminus: Bis(5'-nucleosyl)-tetraphosphatase, symmetrical (282 aa).

It belongs to the Ap4A hydrolase family.

It carries out the reaction P(1),P(4)-bis(5'-adenosyl) tetraphosphate + H2O = 2 ADP + 2 H(+). Its function is as follows. Hydrolyzes diadenosine 5',5'''-P1,P4-tetraphosphate to yield ADP. The chain is Bis(5'-nucleosyl)-tetraphosphatase, symmetrical from Escherichia fergusonii (strain ATCC 35469 / DSM 13698 / CCUG 18766 / IAM 14443 / JCM 21226 / LMG 7866 / NBRC 102419 / NCTC 12128 / CDC 0568-73).